Consider the following 186-residue polypeptide: Putative 3-methyladenine DNA glycosylase (186 aa).

It belongs to the DNA glycosylase MPG family.

The polypeptide is Putative 3-methyladenine DNA glycosylase (Borreliella afzelii (strain PKo) (Borrelia afzelii)).